The sequence spans 173 residues: Transcription factor E (173 aa).

An HTH TFE/IIEalpha-type domain is found at 3-88 (NNPIIQQVLL…TWRATFTKLP (86 aa)).

Belongs to the TFE family. As to quaternary structure, monomer. Interaction with RNA polymerase subunits RpoF and RpoE is necessary for Tfe stimulatory transcription activity. Able to interact with Tbp and RNA polymerase in the absence of DNA promoter. Interacts both with the preinitiation and elongation complexes.

In terms of biological role, transcription factor that plays a role in the activation of archaeal genes transcribed by RNA polymerase. Facilitates transcription initiation by enhancing TATA-box recognition by TATA-box-binding protein (Tbp), and transcription factor B (Tfb) and RNA polymerase recruitment. Not absolutely required for transcription in vitro, but particularly important in cases where Tbp or Tfb function is not optimal. It dynamically alters the nucleic acid-binding properties of RNA polymerases by stabilizing the initiation complex and destabilizing elongation complexes. Seems to translocate with the RNA polymerase following initiation and acts by binding to the non template strand of the transcription bubble in elongation complexes. The protein is Transcription factor E of Methanococcus aeolicus (strain ATCC BAA-1280 / DSM 17508 / OCM 812 / Nankai-3).